Consider the following 265-residue polypeptide: uncharacterized protein (265 aa).

Position 223 is a phosphoserine (S223).

This is an uncharacterized protein from Saccharomyces cerevisiae (strain ATCC 204508 / S288c) (Baker's yeast).